We begin with the raw amino-acid sequence, 160 residues long: Cytochrome b6-f complex subunit 4 (160 aa).

3 helical membrane-spanning segments follow: residues 36–56 (LLYTFPVVILGTITCCIGLAL), 95–115 (LLGVLSMASVPLGLIFVPFIE), and 127–147 (PIATTVFLVGTVVTIWLGIGA).

Belongs to the cytochrome b family. PetD subfamily. As to quaternary structure, the 4 large subunits of the cytochrome b6-f complex are cytochrome b6, subunit IV (17 kDa polypeptide, petD), cytochrome f and the Rieske protein, while the 4 small subunits are petG, petL, petM and petN. The complex functions as a dimer.

It localises to the plastid. The protein localises to the chloroplast thylakoid membrane. In terms of biological role, component of the cytochrome b6-f complex, which mediates electron transfer between photosystem II (PSII) and photosystem I (PSI), cyclic electron flow around PSI, and state transitions. This is Cytochrome b6-f complex subunit 4 from Cyanidioschyzon merolae (strain NIES-3377 / 10D) (Unicellular red alga).